Consider the following 447-residue polypeptide: C4-dicarboxylate transport protein (447 aa).

Transmembrane regions (helical) follow at residues 19-39 (ILYVQVLVAIVAGVLLGHFYP), 55-75 (LVKMIIAPVIFLTVVTGIAGL), 90-110 (IYFLSFSTLALIIGMIVANVV), 155-175 (AFASGDILQVLFFAVLFGIAL), 199-219 (LVAIVMKAAPLGAFGAMAFTI), 232-252 (MLVGTFYLTSGLFVFVVLGLV), 343-363 (LLLVAMLSSKGAAGITGAGFI), and 366-386 (AATLSVVPSVPVAGMALILGV).

The protein belongs to the dicarboxylate/amino acid:cation symporter (DAACS) (TC 2.A.23) family.

It localises to the cell inner membrane. Responsible for the transport of dicarboxylates such as succinate, fumarate, and malate from the periplasm across the membrane. This is C4-dicarboxylate transport protein from Rhodospirillum rubrum (strain ATCC 11170 / ATH 1.1.1 / DSM 467 / LMG 4362 / NCIMB 8255 / S1).